We begin with the raw amino-acid sequence, 2158 residues long: Non-reducing polyketide synthase Preu8 (2158 aa).

Residues Leu4 to His241 form an N-terminal acylcarrier protein transacylase domain (SAT) region. The Ketosynthase family 3 (KS3) domain occupies Asn369–Asp801. Residues Cys541, His676, and His719 each act as for beta-ketoacyl synthase activity in the active site. Positions Phe900–Ala1215 are malonyl-CoA:ACP transacylase (MAT) domain. The For acyl/malonyl transferase activity role is filled by Ser989. Residues Ser1285–Pro1603 form a product template (PT) domain region. The segment at Gln1287–Gln1423 is N-terminal hotdog fold. The PKS/mFAS DH domain occupies Gln1287–Asn1598. Residue His1319 is the Proton acceptor; for dehydratase activity of the active site. A C-terminal hotdog fold region spans residues Ala1451–Asn1598. Asp1511 acts as the Proton donor; for dehydratase activity in catalysis. A compositionally biased stretch (low complexity) spans Lys1619–Ser1639. Residues Lys1619 to Thr1654 form a disordered region. The Carrier 1 domain occupies Asp1651 to Asp1725. Ser1685 carries the post-translational modification O-(pantetheine 4'-phosphoryl)serine. A disordered region spans residues Gln1723–Ser1779. Over residues Asp1731–Asp1740 the composition is skewed to acidic residues. Over residues Ser1743–Ser1770 the composition is skewed to polar residues. The region spanning Ser1779–Pro1853 is the Carrier 2 domain. An O-(pantetheine 4'-phosphoryl)serine modification is found at Ser1813. The tract at residues Asn1847 to Gln1879 is disordered. Residues Glu1860–Lys1876 show a composition bias toward low complexity. Positions Ser1894–His2144 are thioesterase (TE) domain.

The cofactor is pantetheine 4'-phosphate.

In terms of biological role, non-reducing polyketide synthase; part of a gene cluster that mediates the biosynthesis of a yet unidentified natural product. The protein is Non-reducing polyketide synthase Preu8 of Preussia isomera (Coprophilous fungus).